The primary structure comprises 335 residues: Olfactory receptor 52B6 (335 aa).

Topologically, residues 1–45 are extracellular; the sequence is MAQVRALHKIMALFSANSIGAMNNSDTRIAGCFLTGIPGLEQLHI. Residue Asn-23 is glycosylated (N-linked (GlcNAc...) asparagine). Residues 46–66 traverse the membrane as a helical segment; that stretch reads WLSIPFCIMYITALEGNGILI. Topologically, residues 67-74 are cytoplasmic; the sequence is CVILSQAI. A helical membrane pass occupies residues 75 to 95; that stretch reads LHEPMYIFLSMLASADVLLST. At 96 to 119 the chain is on the extracellular side; the sequence is TTMPKALANLWLGYSLISFDGCLT. A disulfide bridge connects residues Cys-117 and Cys-208. Residues 120 to 139 form a helical membrane-spanning segment; the sequence is QMFFIHFLFIHSAVLLAMAF. Residues 140 to 158 are Cytoplasmic-facing; it reads DRYVAICSPLRYVTILTSK. The helical transmembrane segment at 159-179 threads the bilayer; it reads VIGKIVTAALSHSFIIMFPSI. Residues 180–215 are Extracellular-facing; it reads FLLEHLHYCQINIIAHTFCEHMGIAHLSCSDISINV. Residues 216–236 form a helical membrane-spanning segment; sequence WYGLAAALLSTGLDIMLITVS. At 237–256 the chain is on the cytoplasmic side; the sequence is YIHILQAVFRLLSQDARSKA. The helical transmembrane segment at 257 to 277 threads the bilayer; it reads LSTCGSHICVILLFYVPALFS. Residues 278 to 293 are Extracellular-facing; that stretch reads VFAYRFGGRSVPCYVH. A helical transmembrane segment spans residues 294-314; sequence ILLASLYVVIPPMLNPVIYGV. The Cytoplasmic portion of the chain corresponds to 315-335; sequence RTKPILEGAKQMFSNLAKGSK.

The protein belongs to the G-protein coupled receptor 1 family.

The protein localises to the cell membrane. Its function is as follows. Odorant receptor. The polypeptide is Olfactory receptor 52B6 (OR52B6) (Homo sapiens (Human)).